We begin with the raw amino-acid sequence, 712 residues long: Probable serine/threonine-protein kinase fhkE (712 aa).

Residues 46 to 100 (ITFGRLKDSTVHYNDKSISGSHCKITRESNDDDGVVIAFIYDNSTNGTFIDNIKV) form the FHA domain. The region spanning 145–411 (YFIGEMLGQG…CNNIIQHPWF (267 aa)) is the Protein kinase domain. ATP-binding positions include 151 to 159 (LGQGNFATV) and lysine 174. Aspartate 270 (proton acceptor) is an active-site residue. The stretch at 414-442 (NVKLSTLLEEDERLRKKAEAEVEANNNNT) forms a coiled coil. Residues 431–695 (AEAEVEANNN…KCQYDPNCYR (265 aa)) form a disordered region. Low complexity-rich tracts occupy residues 436–446 (EANNNNTNKSN), 459–481 (GNCS…IKSN), 514–571 (NNDN…SNDT), 595–605 (NLQNHLNNNKI), and 616–639 (NNNN…NNNN). Polar residues predominate over residues 669–678 (PQNSSNNNSG).

This sequence belongs to the protein kinase superfamily. CAMK Ser/Thr protein kinase family. CHK2 subfamily.

The catalysed reaction is L-seryl-[protein] + ATP = O-phospho-L-seryl-[protein] + ADP + H(+). It catalyses the reaction L-threonyl-[protein] + ATP = O-phospho-L-threonyl-[protein] + ADP + H(+). In Dictyostelium discoideum (Social amoeba), this protein is Probable serine/threonine-protein kinase fhkE (fhkE).